We begin with the raw amino-acid sequence, 311 residues long: MTQKIKCALIGPGNIGTDLLAKLQRSPVLEPVWMVGIDPESDGLRRAREMGIKTTAEGVDGLLPHVLADGVQIAFDATSAYVHAENSRKLNALGVLMIDLTPAAIGPYCVPPVNLKEHLGRAEMNVNMVTCGGQATIPMVAAVSRVQPVAYGEIVATVSSRSVGPGTRKNIDEFTRTTAGAVERVGGAKKGKAIIVINPAEPPLIMRDTVHCLTETEPDQAAITASIQAMIKEVQKYVPGYKLVNGPVFDGNRVSVFLEVEGLGDYLPKYAGNLDIMTAAAARTAEMFAEEMIKGELNLRAGTAASATETA.

Residue Cys-131 is the Acyl-thioester intermediate of the active site. NAD(+) is bound by residues 162-170 (SVGPGTRKN) and Asn-273.

It belongs to the acetaldehyde dehydrogenase family.

The catalysed reaction is acetaldehyde + NAD(+) + CoA = acetyl-CoA + NADH + H(+). This is Acetaldehyde dehydrogenase from Ralstonia pickettii (strain 12J).